The chain runs to 404 residues: 4-hydroxy-3-methylbut-2-en-1-yl diphosphate synthase (ferredoxin) (404 aa).

Residues Cys313, Cys316, Cys347, and Glu354 each contribute to the [4Fe-4S] cluster site.

The protein belongs to the IspG family. It depends on [4Fe-4S] cluster as a cofactor.

It carries out the reaction (2E)-4-hydroxy-3-methylbut-2-enyl diphosphate + 2 oxidized [2Fe-2S]-[ferredoxin] + H2O = 2-C-methyl-D-erythritol 2,4-cyclic diphosphate + 2 reduced [2Fe-2S]-[ferredoxin] + H(+). The protein operates within isoprenoid biosynthesis; isopentenyl diphosphate biosynthesis via DXP pathway; isopentenyl diphosphate from 1-deoxy-D-xylulose 5-phosphate: step 5/6. Functionally, converts 2C-methyl-D-erythritol 2,4-cyclodiphosphate (ME-2,4cPP) into 1-hydroxy-2-methyl-2-(E)-butenyl 4-diphosphate. This Crocosphaera subtropica (strain ATCC 51142 / BH68) (Cyanothece sp. (strain ATCC 51142)) protein is 4-hydroxy-3-methylbut-2-en-1-yl diphosphate synthase (ferredoxin).